The chain runs to 158 residues: tRNA (cytidine(34)-2'-O)-methyltransferase (158 aa).

S-adenosyl-L-methionine-binding residues include glycine 103, isoleucine 123, and serine 131.

Belongs to the class IV-like SAM-binding methyltransferase superfamily. RNA methyltransferase TrmH family. TrmL subfamily. In terms of assembly, homodimer.

It is found in the cytoplasm. It catalyses the reaction cytidine(34) in tRNA + S-adenosyl-L-methionine = 2'-O-methylcytidine(34) in tRNA + S-adenosyl-L-homocysteine + H(+). It carries out the reaction 5-carboxymethylaminomethyluridine(34) in tRNA(Leu) + S-adenosyl-L-methionine = 5-carboxymethylaminomethyl-2'-O-methyluridine(34) in tRNA(Leu) + S-adenosyl-L-homocysteine + H(+). Functionally, methylates the ribose at the nucleotide 34 wobble position in the two leucyl isoacceptors tRNA(Leu)(CmAA) and tRNA(Leu)(cmnm5UmAA). Catalyzes the methyl transfer from S-adenosyl-L-methionine to the 2'-OH of the wobble nucleotide. This chain is tRNA (cytidine(34)-2'-O)-methyltransferase, found in Ancylobacter novellus (strain ATCC 8093 / DSM 506 / JCM 20403 / CCM 1077 / IAM 12100 / NBRC 12443 / NCIMB 10456) (Starkeya novella).